Reading from the N-terminus, the 284-residue chain is CBY1-interacting BAR domain-containing protein 1-A (284 aa).

Residues methionine 1–lysine 48 constitute a mitochondrion transit peptide. The interval aspartate 11–valine 221 is BAR-like. Coiled-coil stretches lie at residues arginine 142–leucine 184 and asparagine 260–asparagine 284. Over residues serine 242–arginine 261 the composition is skewed to polar residues. The disordered stretch occupies residues serine 242–asparagine 284. Acidic residues predominate over residues glutamate 267–asparagine 284.

The protein belongs to the CIBAR family.

The protein resides in the cytoplasm. The protein localises to the cytoskeleton. It is found in the microtubule organizing center. Its subcellular location is the centrosome. It localises to the centriole. The protein resides in the nucleus. The protein localises to the mitochondrion inner membrane. It is found in the cell projection. Its subcellular location is the cilium. It localises to the flagellum. Functionally, plays a critical role in regulating mitochondrial ultrastructure and function by maintaining the integrity of mitochondrial morphology, particularly the organization of cristae. Plays a crucial role in ciliogenesis. Plays a key role in the correct positioning of the annulus, a septin-based ring structure in the sperm flagellum, serving both as a physical barrier and a membrane diffusion barrier that separates the midpiece (MP) from the principal piece (PP). The chain is CBY1-interacting BAR domain-containing protein 1-A from Xenopus laevis (African clawed frog).